A 729-amino-acid polypeptide reads, in one-letter code: Phosphoribosylformylglycinamidine synthase subunit PurL (729 aa).

Residue H54 is part of the active site. 2 residues coordinate ATP: Y57 and K96. E98 serves as a coordination point for Mg(2+). Substrate contacts are provided by residues 99–102 (SHNH) and R121. Catalysis depends on H100, which acts as the Proton acceptor. Residue D122 coordinates Mg(2+). Q245 contacts substrate. A Mg(2+)-binding site is contributed by D273. Substrate is bound at residue 317-319 (ETQ). Residues D495 and G532 each contribute to the ATP site. Residue N533 participates in Mg(2+) binding. S535 contributes to the substrate binding site.

It belongs to the FGAMS family. As to quaternary structure, monomer. Part of the FGAM synthase complex composed of 1 PurL, 1 PurQ and 2 PurS subunits.

The protein localises to the cytoplasm. The enzyme catalyses N(2)-formyl-N(1)-(5-phospho-beta-D-ribosyl)glycinamide + L-glutamine + ATP + H2O = 2-formamido-N(1)-(5-O-phospho-beta-D-ribosyl)acetamidine + L-glutamate + ADP + phosphate + H(+). It functions in the pathway purine metabolism; IMP biosynthesis via de novo pathway; 5-amino-1-(5-phospho-D-ribosyl)imidazole from N(2)-formyl-N(1)-(5-phospho-D-ribosyl)glycinamide: step 1/2. Functionally, part of the phosphoribosylformylglycinamidine synthase complex involved in the purines biosynthetic pathway. Catalyzes the ATP-dependent conversion of formylglycinamide ribonucleotide (FGAR) and glutamine to yield formylglycinamidine ribonucleotide (FGAM) and glutamate. The FGAM synthase complex is composed of three subunits. PurQ produces an ammonia molecule by converting glutamine to glutamate. PurL transfers the ammonia molecule to FGAR to form FGAM in an ATP-dependent manner. PurS interacts with PurQ and PurL and is thought to assist in the transfer of the ammonia molecule from PurQ to PurL. The chain is Phosphoribosylformylglycinamidine synthase subunit PurL from Staphylococcus saprophyticus subsp. saprophyticus (strain ATCC 15305 / DSM 20229 / NCIMB 8711 / NCTC 7292 / S-41).